The following is a 347-amino-acid chain: tRNA pseudouridine synthase D (347 aa).

Asp-81 (nucleophile) is an active-site residue. One can recognise a TRUD domain in the interval 158–305 (GVPNYFGSQR…RHDRREIALK (148 aa)).

Belongs to the pseudouridine synthase TruD family.

The catalysed reaction is uridine(13) in tRNA = pseudouridine(13) in tRNA. Responsible for synthesis of pseudouridine from uracil-13 in transfer RNAs. The polypeptide is tRNA pseudouridine synthase D (Vibrio parahaemolyticus serotype O3:K6 (strain RIMD 2210633)).